The following is a 223-amino-acid chain: Ribonuclease 3 (223 aa).

In terms of domain architecture, RNase III spans 4–127; the sequence is YSQLEKRLNY…IIGAVYLEAG (124 aa). Position 40 (glutamate 40) interacts with Mg(2+). The active site involves aspartate 44. The Mg(2+) site is built by asparagine 113 and glutamate 116. Residue glutamate 116 is part of the active site. The region spanning 154–223 is the DRBM domain; it reads DYKTALQELT…AKIALEALKK (70 aa).

It belongs to the ribonuclease III family. Homodimer. The cofactor is Mg(2+).

The protein localises to the cytoplasm. It catalyses the reaction Endonucleolytic cleavage to 5'-phosphomonoester.. Its function is as follows. Digests double-stranded RNA. Involved in the processing of primary rRNA transcript to yield the immediate precursors to the large and small rRNAs (23S and 16S). Processes some mRNAs, and tRNAs when they are encoded in the rRNA operon. Processes pre-crRNA and tracrRNA of type II CRISPR loci if present in the organism. The polypeptide is Ribonuclease 3 (Sulfurovum sp. (strain NBC37-1)).